We begin with the raw amino-acid sequence, 204 residues long: Ribosomal RNA small subunit methyltransferase G (204 aa).

Residues G74, L79, 125 to 126 (AY), and R138 each bind S-adenosyl-L-methionine.

It belongs to the methyltransferase superfamily. RNA methyltransferase RsmG family.

It localises to the cytoplasm. Functionally, specifically methylates the N7 position of a guanine in 16S rRNA. The polypeptide is Ribosomal RNA small subunit methyltransferase G (Brachyspira hyodysenteriae (strain ATCC 49526 / WA1)).